The chain runs to 463 residues: METVLVKQLYRETEKFAGKEVKISGWIRTLRASNKFGFIEVNDGSFFKNIQVVFGAELENFKEISKYAISSSISVEGEVVITEGAKQPFEIHAKKVVLEGKSDADYPLQKKRHTFEYLRSIAHLRPRSNAFSAVFRVRSLAAYAIHKFFQDQGFVYVHTPIITGSDCEGAGEMFRVTTLDMENPPKDEKGNVDYKEDFFGKQANLTVSGQLEAEIYALAFRNVYTFGPTFRAENSNTARHASEFWMIEPEMAFAELKDYMDVAEQMVKYIINYVRENAPEEMEFFNKFIDKGLLERLDNVVNSDFARISYTEAVEILQKSGAEFEYPVEWGIDLQTEHERYLTEQIYKKPVFVTDYPKDIKAFYMRMNDDNKTVAAADLLVPGIGEIIGGSQREERLDILEARMAELGLEKEDYWWYLELRKYGETKHAGYGLGFERMIMYLTGMGNIRDVIPFPRTPGVSEF.

The protein belongs to the class-II aminoacyl-tRNA synthetase family. Homodimer.

The protein resides in the cytoplasm. It catalyses the reaction tRNA(Asn) + L-asparagine + ATP = L-asparaginyl-tRNA(Asn) + AMP + diphosphate + H(+). This chain is Asparagine--tRNA ligase, found in Clostridium novyi (strain NT).